The chain runs to 1756 residues: Multifunctional conjugation protein TraI (1756 aa).

Positions 1-330 are DNA relaxase; the sequence is MLSFSVVKSA…TQAIAGLSER (330 aa). Tyr16 (O-(5'-phospho-DNA)-tyrosine intermediate; for relaxase activity) is an active-site residue. Tyr17 serves as the catalytic Relaxase. Mg(2+) contacts are provided by His146, His157, and His159. The interval 950–1500 is DNA helicase I; that stretch reads GKEAVTPLME…LRDVAAGRAV (551 aa). 992-999 is a binding site for ATP; the sequence is GYAGVGKT. A coiled-coil region spans residues 1719-1753; that stretch reads EQEAVREVARENLLQERLQQIERDMVRDLQKEKTL.

It to TraI of plasmid F. As to quaternary structure, monomer. Part of the relaxosome, a complex composed of plasmid-encodes TraI, TraM, TraY and host-encoded IHF bound to the F plasmid origin of transfer (oriT). Directly contacts coupling protein TraD. Seems to directly contact TraM via its C-terminus. Mg(2+) serves as cofactor.

Its subcellular location is the cytoplasm. The catalysed reaction is ATP-independent breakage of single-stranded DNA, followed by passage and rejoining.. It catalyses the reaction ATP + H2O = ADP + phosphate + H(+). Functionally, conjugative DNA transfer (CDT) is the unidirectional transfer of ssDNA plasmid from a donor to a recipient cell. It is the central mechanism by which antibiotic resistance and virulence factors are propagated in bacterial populations. Part of the relaxosome, which facilitates a site- and strand-specific cut in the origin of transfer by TraI, at the nic site. Relaxosome formation requires binding of IHF and TraY to the oriT region, which then facilitates binding of TraI relaxase. TraI forms a covalent 5'-phosphotyrosine intermediate linkage to the ssDNA. The transesterified T-strand moves from the donor cell to the recipient cell in a 5'to 3' direction, with the DNA helicase activity of TraI unwinding the DNA. DNA transfer occurs via the conjugative pore (transferosome) an intercellular junction mediated by a type IV secretion system, with TraD providing the means to link the relaxosome to the conjugative pore. The relaxase completes DNA transfer by reversing the covalent phosphotyrosine linkage and releasing the T-strand. Its function is as follows. TraI has also been identified as DNA helicase I. DNA. helicase I is a potent, highly processive DNA-dependent ATPase, able to unwind about 1.1 kb dsDNA per second in a 5' to 3' manner. This chain is Multifunctional conjugation protein TraI (traI), found in Escherichia coli.